The following is an 83-amino-acid chain: Putative defensin-like protein 131 (83 aa).

The first 34 residues, 1–34 (MAKNRVLTIFYCTIYYCICFKYVLLGMVVEKTQG), serve as a signal peptide directing secretion. Disulfide bonds link cysteine 37–cysteine 83, cysteine 46–cysteine 65, cysteine 51–cysteine 77, and cysteine 55–cysteine 79.

This sequence belongs to the DEFL family.

The protein resides in the secreted. The polypeptide is Putative defensin-like protein 131 (LCR29) (Arabidopsis thaliana (Mouse-ear cress)).